The following is an 89-amino-acid chain: Small ribosomal subunit protein uS17 (89 aa).

The protein belongs to the universal ribosomal protein uS17 family. Part of the 30S ribosomal subunit.

Functionally, one of the primary rRNA binding proteins, it binds specifically to the 5'-end of 16S ribosomal RNA. This is Small ribosomal subunit protein uS17 from Chlorobium phaeobacteroides (strain BS1).